Here is a 260-residue protein sequence, read N- to C-terminus: Small ribosomal subunit protein eS4 (260 aa).

The S4 RNA-binding domain occupies 46-111 (VPLLILVRDM…RYRVVMNEHH (66 aa)).

It belongs to the eukaryotic ribosomal protein eS4 family.

This chain is Small ribosomal subunit protein eS4, found in Methanopyrus kandleri (strain AV19 / DSM 6324 / JCM 9639 / NBRC 100938).